The chain runs to 139 residues: Small ribosomal subunit protein uS12 (139 aa).

2 disordered regions span residues 1–22 (MPTINQLVRKGRKSHKGKSKSP) and 37–57 (KTPSPQKRGVATRVGTMTPKK). Residues 9-19 (RKGRKSHKGKS) are compositionally biased toward basic residues. The residue at position 102 (Asp102) is a 3-methylthioaspartic acid.

Belongs to the universal ribosomal protein uS12 family. Part of the 30S ribosomal subunit. Contacts proteins S8 and S17. May interact with IF1 in the 30S initiation complex.

In terms of biological role, with S4 and S5 plays an important role in translational accuracy. Its function is as follows. Interacts with and stabilizes bases of the 16S rRNA that are involved in tRNA selection in the A site and with the mRNA backbone. Located at the interface of the 30S and 50S subunits, it traverses the body of the 30S subunit contacting proteins on the other side and probably holding the rRNA structure together. The combined cluster of proteins S8, S12 and S17 appears to hold together the shoulder and platform of the 30S subunit. In Limosilactobacillus reuteri (strain DSM 20016) (Lactobacillus reuteri), this protein is Small ribosomal subunit protein uS12.